A 427-amino-acid chain; its full sequence is Inward rectifier potassium channel 2 (427 aa).

The Cytoplasmic segment spans residues 1-81 (MGSVRTNRYS…IFTTCVDIRW (81 aa)). Position 76 is an S-nitrosocysteine (Cys-76). The chain crosses the membrane as a helical span at residues 82–106 (RWMLVIFCLAFVLSWLFFGCVFWLI). The Extracellular portion of the chain corresponds to 107–128 (ALLHGDLDASKESKACVSEVNS). Residues 129-140 (FTAAFLFSIETQ) constitute an intramembrane region (helical; Pore-forming). The pore-forming intramembrane region spans 141-147 (TTIGYGF). Residues 142–147 (TIGYGF) carry the Selectivity filter motif. Residues 148-156 (RCVTDECPI) are Extracellular-facing. A helical membrane pass occupies residues 157 to 178 (AVFMVVFQSIVGCIIDAFIIGA). Residues 179-427 (VMAKMAKPKK…PRPLRRESEI (249 aa)) are Cytoplasmic-facing. Residues 181–208 (AKMAKPKKRNETLVFSHNAVIAMRDGKL) form a polyphosphoinositide (PIP2)-binding region. Positions 383-427 (TSKEEEDSENGVPESTSTDSPPGIDLHNQASVPLEPRPLRRESEI) are disordered. The short motif at 425-427 (SEI) is the PDZ-binding element.

This sequence belongs to the inward rectifier-type potassium channel (TC 1.A.2.1) family. KCNJ2 subfamily. Homotetramer. Homomultimeric and heteromultimeric association with KCNJ4/Kir2.3. Can form heteromeric channels with Kir2.6/KCNJ18. Associates, via its PDZ-recognition domain, with a complex containing LIN7A, LIN7B, LIN7C, DLG1, CASK and APBA1. In terms of processing, S-nitrosylation increases the open probability and inward rectifying currents. In terms of tissue distribution, prominently expressed in the central nervous system. Also found in other excitable tissues such as heart and skeletal muscle.

It is found in the cell membrane. The protein resides in the sarcolemma. Its subcellular location is the T-tubule. It catalyses the reaction K(+)(in) = K(+)(out). With respect to regulation, activated by phosphatidylinositol 4,5 biphosphate (PtdIns(4,5)P2). Functionally, inward rectifier potassium channels are characterized by a greater tendency to allow potassium to flow into the cell rather than out of it. Their voltage dependence is regulated by the concentration of extracellular potassium; as external potassium is raised, the voltage range of the channel opening shifts to more positive voltages. The inward rectification is mainly due to the blockage of outward current by internal magnesium. Can be blocked by extracellular barium and cesium. Probably participates in establishing action potential waveform and excitability of neuronal and muscle tissues. The polypeptide is Inward rectifier potassium channel 2 (Kcnj2) (Rattus norvegicus (Rat)).